Consider the following 179-residue polypeptide: Replication restart protein DnaT (179 aa).

Residues 151-168 are compositionally biased toward polar residues; it reads SRSSNGGMPQRDINSVSE. The interval 151-179 is disordered; the sequence is SRSSNGGMPQRDINSVSEPDNHIPPGFRG.

The protein belongs to the DnaT family. As to quaternary structure, homooligomerizes. Interacts with PriB. Component of the replication restart primosome. Primosome assembly occurs via a 'hand-off' mechanism. PriA binds to replication forks, subsequently PriB then DnaT bind; DnaT then displaces ssDNA to generate the helicase loading substrate.

Its function is as follows. Involved in the restart of stalled replication forks, which reloads the replicative helicase on sites other than the origin of replication. Can function in multiple replication restart pathways. Displaces ssDNA from a PriB-ssDNA complex. Probably forms a spiral filament on ssDNA. This is Replication restart protein DnaT from Salmonella arizonae (strain ATCC BAA-731 / CDC346-86 / RSK2980).